The following is a 649-amino-acid chain: Serine/threonine-protein kinase par-4 (649 aa).

A compositionally biased stretch (polar residues) spans 1–11 (MEGPSSSSVPT). A disordered region spans residues 1–132 (MEGPSSSSVP…DEEAETPEEQ (132 aa)). Residues 45 to 55 (NTEKMEKEKKP) show a composition bias toward basic and acidic residues. 2 stretches are compositionally biased toward acidic residues: residues 64-77 (PDYD…GSCE) and 117-129 (DDME…AETP). The Protein kinase domain maps to 197–460 (YLWGGIIGTG…ISDVMQHPWF (264 aa)). ATP is bound by residues 203 to 211 (IGTGSYGKV) and lysine 226. The active-site Proton acceptor is aspartate 324. Residues 548–649 (TLEKRPGDGP…CIFRSRTDSS (102 aa)) are disordered. Positions 597-609 (AVEVVEAVAAPEA) are enriched in low complexity.

This sequence belongs to the protein kinase superfamily. CAMK Ser/Thr protein kinase family. LKB1 subfamily. It depends on Mg(2+) as a cofactor. Requires Mn(2+) as cofactor.

The protein localises to the cytoplasm. It is found in the cell cortex. It carries out the reaction L-seryl-[protein] + ATP = O-phospho-L-seryl-[protein] + ADP + H(+). The catalysed reaction is L-threonyl-[protein] + ATP = O-phospho-L-threonyl-[protein] + ADP + H(+). In terms of biological role, required for cytoplasmic partitioning and asymmetric cell division in early embryogenesis. Phosphorylates and restricts the asymmetry effectors mex-5 and mex-6 to the anterior cytoplasm of the zygote and maintains these phosphorylations until fertilization. Phosphorylates and regulates aak-2 in response to oxidative stress. May also play a role in motility, behavioral response, regulation of lifespan and dauer formation through this pathway. The sequence is that of Serine/threonine-protein kinase par-4 from Caenorhabditis briggsae.